Here is a 741-residue protein sequence, read N- to C-terminus: Alpha-1,6-mannosylglycoprotein 6-beta-N-acetylglucosaminyltransferase A (741 aa).

The Cytoplasmic segment spans residues 1–13; sequence MALFTPWKLSSQK. The helical; Signal-anchor for type II membrane protein transmembrane segment at 14-30 threads the bilayer; it reads LGFFLVTFGFIWGMMLL. Over 31–741 the chain is Lumenal; that stretch reads HFTIQQRTQP…GQVALCKDCL (711 aa). N-linked (GlcNAc...) asparagine glycosylation is found at Asn-110, Asn-115, and Asn-118. Intrachain disulfides connect Cys-145–Cys-183, Cys-156–Cys-196, Cys-172–Cys-338, Cys-372–Cys-626, Cys-649–Cys-724, Cys-653–Cys-726, Cys-660–Cys-713, Cys-681–Cys-702, and Cys-737–Cys-740. A sufficient for catalytic activity region spans residues 213 to 741; sequence NSLAEIRTDF…GQVALCKDCL (529 aa). The segment at 264 to 269 is important for activity in FGF2 release; it reads KRKRKK. The N-linked (GlcNAc...) asparagine glycan is linked to Asn-334. 378-379 is a binding site for substrate; the sequence is DS. N-linked (GlcNAc...) asparagine glycans are attached at residues Asn-433 and Asn-447. Residue Glu-526 participates in UDP-N-acetyl-alpha-D-glucosamine binding. Substrate is bound at residue Lys-554.

The protein belongs to the glycosyltransferase 18 family. In terms of processing, N-glycosylated. Post-translationally, a secreted form is released from the membrane after cleavage by gamma-secretase.

Its subcellular location is the golgi apparatus membrane. The protein localises to the secreted. The enzyme catalyses N(4)-{beta-D-GlcNAc-(1-&gt;2)-[beta-D-GlcNAc-(1-&gt;4)]-alpha-D-Man-(1-&gt;3)-[beta-D-GlcNAc-(1-&gt;2)-alpha-D-Man-(1-&gt;6)]-beta-D-Man-(1-&gt;4)-beta-D-GlcNAc-(1-&gt;4)-beta-D-GlcNAc}-L-asparaginyl-[protein] + UDP-N-acetyl-alpha-D-glucosamine = N(4)-{beta-D-GlcNAc-(1-&gt;2)-[beta-D-GlcNAc-(1-&gt;4)]-alpha-D-Man-(1-&gt;3)-[beta-D-GlcNAc-(1-&gt;2)-[beta-D-GlcNAc-(1-&gt;6)]-alpha-D-Man-(1-&gt;6)]-beta-D-Man-(1-&gt;4)-beta-D-GlcNAc-(1-&gt;4)-beta-D-GlcNAc}-L-asparaginyl-[protein] + UDP + H(+). It functions in the pathway protein modification; protein glycosylation. Activity is increased by Mn(2+) and Mg(2+). Its function is as follows. Catalyzes the addition of N-acetylglucosamine (GlcNAc) in beta 1-6 linkage to the alpha-linked mannose of biantennary N-linked oligosaccharides. Catalyzes an important step in the biosynthesis of branched, complex-type N-glycans, such as those found on EGFR, TGFR (TGF-beta receptor) and CDH2. Via its role in the biosynthesis of complex N-glycans, plays an important role in the activation of cellular signaling pathways, reorganization of the actin cytoskeleton, cell-cell adhesion and cell migration. MGAT5-dependent EGFR N-glycosylation enhances the interaction between EGFR and LGALS3 and thereby prevents rapid EGFR endocytosis and prolongs EGFR signaling. Required for efficient interaction between TGFB1 and its receptor. Enhances activation of intracellular signaling pathways by several types of growth factors, including FGF2, PDGF, IGF, TGFB1 and EGF. MGAT5-dependent CDH2 N-glycosylation inhibits CDH2-mediated homotypic cell-cell adhesion and contributes to the regulation of downstream signaling pathways. Promotes cell migration. Contributes to the regulation of the inflammatory response. MGAT5-dependent TCR N-glycosylation enhances the interaction between TCR and LGALS3, limits agonist-induced TCR clustering, and thereby dampens TCR-mediated responses to antigens. Required for normal leukocyte evasation and accumulation at sites of inflammation. Inhibits attachment of monocytes to the vascular endothelium and subsequent monocyte diapedesis. Promotes proliferation of umbilical vein endothelial cells and angiogenesis, at least in part by promoting the release of the growth factor FGF2 from the extracellular matrix. The protein is Alpha-1,6-mannosylglycoprotein 6-beta-N-acetylglucosaminyltransferase A (MGAT5) of Homo sapiens (Human).